The following is a 395-amino-acid chain: Flap endonuclease 1 (395 aa).

An N-domain region spans residues 1 to 104 (MGIKHLYQII…GELAKRFMRK (104 aa)). Asp34 lines the Mg(2+) pocket. The DNA site is built by Arg47 and Arg70. Mg(2+)-binding residues include Asp86, Glu158, Glu160, Asp179, and Asp181. The segment at 122-253 (EVEKFSRRTV…NTALKLIRDH (132 aa)) is I-domain. Glu158 serves as a coordination point for DNA. The DNA site is built by Gly231 and Asp233. Asp233 contacts Mg(2+). The interval 341–349 (QQSRLEGFF) is interaction with PCNA. Residues 360–389 (AVLKRKHEEKLELQKKKKKEDAKAKKEAKS) are compositionally biased toward basic and acidic residues. Residues 360 to 395 (AVLKRKHEEKLELQKKKKKEDAKAKKEAKSKPRGTT) form a disordered region.

Belongs to the XPG/RAD2 endonuclease family. FEN1 subfamily. In terms of assembly, interacts with PCNA. Three molecules of FEN1 bind to one PCNA trimer with each molecule binding to one PCNA monomer. PCNA stimulates the nuclease activity without altering cleavage specificity. It depends on Mg(2+) as a cofactor. Phosphorylated. Phosphorylation upon DNA damage induces relocalization to the nuclear plasma.

It is found in the nucleus. The protein localises to the nucleolus. Its subcellular location is the nucleoplasm. The protein resides in the mitochondrion. Its function is as follows. Structure-specific nuclease with 5'-flap endonuclease and 5'-3' exonuclease activities involved in DNA replication and repair. During DNA replication, cleaves the 5'-overhanging flap structure that is generated by displacement synthesis when DNA polymerase encounters the 5'-end of a downstream Okazaki fragment. It enters the flap from the 5'-end and then tracks to cleave the flap base, leaving a nick for ligation. Also involved in the long patch base excision repair (LP-BER) pathway, by cleaving within the apurinic/apyrimidinic (AP) site-terminated flap. Acts as a genome stabilization factor that prevents flaps from equilibrating into structures that lead to duplications and deletions. Also possesses 5'-3' exonuclease activity on nicked or gapped double-stranded DNA, and exhibits RNase H activity. Also involved in replication and repair of rDNA and in repairing mitochondrial DNA. The polypeptide is Flap endonuclease 1 (Ajellomyces capsulatus (strain NAm1 / WU24) (Darling's disease fungus)).